The chain runs to 254 residues: 5-oxoprolinase subunit A (254 aa).

Belongs to the LamB/PxpA family. In terms of assembly, forms a complex composed of PxpA, PxpB and PxpC.

It carries out the reaction 5-oxo-L-proline + ATP + 2 H2O = L-glutamate + ADP + phosphate + H(+). Functionally, catalyzes the cleavage of 5-oxoproline to form L-glutamate coupled to the hydrolysis of ATP to ADP and inorganic phosphate. In Heliobacterium modesticaldum (strain ATCC 51547 / Ice1), this protein is 5-oxoprolinase subunit A.